The following is a 165-amino-acid chain: MDEVPSSDESKSASSGKRVLEQSVHELEEVFKKFDANGDGKISGSELADILRSMGSEVDEAEVKAMMEEADTDGDGYVSLQEFVDLNIKGATVKDLKNAFKVFDRDCNGTISPAELCETLKSVGEPCTIEESKNIIHNVDKNGDGLINVEEFQTMMTSEMTDKSK.

4 EF-hand domains span residues 22–57, 58–86, 91–126, and 127–162; these read QSVH…MGSE, VDEA…FVDL, ATVK…VGEP, and CTIE…EMTD. Residues D35, N37, D39, K41, E46, D71, D73, D75, Y77, E82, D104, D106, N108, T110, E115, D140, N142, D144, and E151 each coordinate Ca(2+).

In terms of assembly, may exist as monomer and dimer. In terms of tissue distribution, expressed in mature pollen grains.

This is Polcalcin Cup a 4 from Hesperocyparis arizonica (Arizona cypress).